The chain runs to 270 residues: MDWKKLQDLLSGVNQYSTAFGRIWLSVVFVFRVLVYVVAAERVWGDEQKDFDCNTRQPGCTNVCYDNFFPISNIRLWALQLIFVTCPSMLVILHVAYREERERKHRQKHGEHCAKLYSHPGKKHGGLWWTYLFSLIFKLIIELVFLYVLHTLWHGFTMPRLVQCASVVPCPNTVDCYIARPTEKKVFTYFMVGASAVCIILTICEICYLIFHRIMRGLSKDKSTKSISSPKSSSRASTCRCHHKLLESGDLEAVPADDKLQASAPSLTPI.

Residues 1–20 (MDWKKLQDLLSGVNQYSTAF) lie on the Cytoplasmic side of the membrane. Residues 21-40 (GRIWLSVVFVFRVLVYVVAA) traverse the membrane as a helical segment. Residues 41-75 (ERVWGDEQKDFDCNTRQPGCTNVCYDNFFPISNIR) lie on the Extracellular side of the membrane. A helical membrane pass occupies residues 76-98 (LWALQLIFVTCPSMLVILHVAYR). Residues 99 to 126 (EERERKHRQKHGEHCAKLYSHPGKKHGG) lie on the Cytoplasmic side of the membrane. The helical transmembrane segment at 127–149 (LWWTYLFSLIFKLIIELVFLYVL) threads the bilayer. Topologically, residues 150-188 (HTLWHGFTMPRLVQCASVVPCPNTVDCYIARPTEKKVFT) are extracellular. Residues 189-211 (YFMVGASAVCIILTICEICYLIF) traverse the membrane as a helical segment. Residues 212-270 (HRIMRGLSKDKSTKSISSPKSSSRASTCRCHHKLLESGDLEAVPADDKLQASAPSLTPI) are Cytoplasmic-facing.

This sequence belongs to the connexin family. Beta-type (group I) subfamily. As to quaternary structure, a connexon is composed of a hexamer of connexins. Interacts with CNST.

Its subcellular location is the cell membrane. It localises to the cell junction. The protein localises to the gap junction. Its function is as follows. One gap junction consists of a cluster of closely packed pairs of transmembrane channels, the connexons, through which materials of low MW diffuse from one cell to a neighboring cell. The chain is Gap junction beta-3 protein (Gjb3) from Rattus norvegicus (Rat).